The following is a 397-amino-acid chain: Tryptophan synthase beta chain (397 aa).

An N6-(pyridoxal phosphate)lysine modification is found at Lys87.

Belongs to the TrpB family. Tetramer of two alpha and two beta chains. The cofactor is pyridoxal 5'-phosphate.

It catalyses the reaction (1S,2R)-1-C-(indol-3-yl)glycerol 3-phosphate + L-serine = D-glyceraldehyde 3-phosphate + L-tryptophan + H2O. Its pathway is amino-acid biosynthesis; L-tryptophan biosynthesis; L-tryptophan from chorismate: step 5/5. In terms of biological role, the beta subunit is responsible for the synthesis of L-tryptophan from indole and L-serine. This Escherichia coli O139:H28 (strain E24377A / ETEC) protein is Tryptophan synthase beta chain.